The primary structure comprises 41 residues: Large ribosomal subunit protein bL36 (41 aa).

Belongs to the bacterial ribosomal protein bL36 family.

The chain is Large ribosomal subunit protein bL36 from Edwardsiella ictaluri (strain 93-146).